The following is a 227-amino-acid chain: Octanoyltransferase (227 aa).

The BPL/LPL catalytic domain occupies 31–209 (ANTIDEIWLV…VFLSLLGGTN (179 aa)). Residues 71 to 78 (RGGKITYH), 139 to 141 (SIG), and 152 to 154 (GLA) contribute to the substrate site. Cys-170 functions as the Acyl-thioester intermediate in the catalytic mechanism.

This sequence belongs to the LipB family.

The protein localises to the cytoplasm. It catalyses the reaction octanoyl-[ACP] + L-lysyl-[protein] = N(6)-octanoyl-L-lysyl-[protein] + holo-[ACP] + H(+). Its pathway is protein modification; protein lipoylation via endogenous pathway; protein N(6)-(lipoyl)lysine from octanoyl-[acyl-carrier-protein]: step 1/2. In terms of biological role, catalyzes the transfer of endogenously produced octanoic acid from octanoyl-acyl-carrier-protein onto the lipoyl domains of lipoate-dependent enzymes. Lipoyl-ACP can also act as a substrate although octanoyl-ACP is likely to be the physiological substrate. This is Octanoyltransferase from Baumannia cicadellinicola subsp. Homalodisca coagulata.